The primary structure comprises 476 residues: Growth/differentiation factor 10 (476 aa).

The N-terminal stretch at 1 to 29 is a signal peptide; it reads MAPGPARISLGSQLLPMVPLLLLLRGAGC. Residues 30 to 366 constitute a propeptide that is removed on maturation; the sequence is GHRGPSWSSL…EKTMQKARRR (337 aa). The interval 39-63 is disordered; that stretch reads LPSAAAGLQGDRDSQQSPGDAAAAL. N-linked (GlcNAc...) asparagine glycans are attached at residues Asn114, Asn152, and Asn277. Positions 268 to 301 are disordered; the sequence is GDFEPGAAPNSSADPRVRRAAQVSKPLQDNELPG. 3 disulfide bridges follow: Cys374–Cys441, Cys403–Cys473, and Cys407–Cys475. A glycan (N-linked (GlcNAc...) asparagine) is linked at Asn467.

This sequence belongs to the TGF-beta family. In terms of assembly, homodimer or heterodimer. Can form a non-covalent complex of the mature region and the pro-region. In terms of tissue distribution, highly expressed in epididymal adipose tissue, brain, bone and aorta and to a lesser extent in liver and spleen. Expressed at higher levels in preadipocytes than in mature adipocytes. Strongly expressed in glial cells of the cerebellum.

It localises to the secreted. Its function is as follows. Growth factor involved in osteogenesis and adipogenesis. Plays an inhibitory role in the process of osteoblast differentiation via SMAD2/3 pathway. Plays an inhibitory role in the process of adipogenesis. This Mus musculus (Mouse) protein is Growth/differentiation factor 10.